The following is a 410-amino-acid chain: Multifunctional CCA protein (410 aa).

2 residues coordinate ATP: Gly-8 and Arg-11. 2 residues coordinate CTP: Gly-8 and Arg-11. Mg(2+) contacts are provided by Glu-21 and Asp-23. ATP is bound by residues Arg-91, Arg-137, and Arg-140. CTP-binding residues include Arg-91, Arg-137, and Arg-140. Residues 228–329 (TGIHSLMTLR…VKLLEQVDAF (102 aa)) form the HD domain.

This sequence belongs to the tRNA nucleotidyltransferase/poly(A) polymerase family. Bacterial CCA-adding enzyme type 1 subfamily. Monomer. Can also form homodimers and oligomers. Mg(2+) is required as a cofactor. Ni(2+) serves as cofactor.

The enzyme catalyses a tRNA precursor + 2 CTP + ATP = a tRNA with a 3' CCA end + 3 diphosphate. It catalyses the reaction a tRNA with a 3' CCA end + 2 CTP + ATP = a tRNA with a 3' CCACCA end + 3 diphosphate. Catalyzes the addition and repair of the essential 3'-terminal CCA sequence in tRNAs without using a nucleic acid template. Adds these three nucleotides in the order of C, C, and A to the tRNA nucleotide-73, using CTP and ATP as substrates and producing inorganic pyrophosphate. tRNA 3'-terminal CCA addition is required both for tRNA processing and repair. Also involved in tRNA surveillance by mediating tandem CCA addition to generate a CCACCA at the 3' terminus of unstable tRNAs. While stable tRNAs receive only 3'-terminal CCA, unstable tRNAs are marked with CCACCA and rapidly degraded. In Legionella pneumophila (strain Lens), this protein is Multifunctional CCA protein.